We begin with the raw amino-acid sequence, 155 residues long: MNQTELQQHMEEVSLQFFQKEFRHQAVFNTRLRTTGGRYLLKSHNIEMNPKYLENFGLEYFFGIMKHELCHYHLHLEKKGYQHRDKDFRELLKKVDAPRFCAAIPREITMHEYTCKSCGKSFLRQRRFNVNRYRCGSCGGRLKQTGSKKVYTESP.

The SprT-like domain occupies 7 to 145 (QQHMEEVSLQ…GSCGGRLKQT (139 aa)). His-67 is a binding site for Zn(2+). Glu-68 is an active-site residue. A Zn(2+)-binding site is contributed by His-71.

This sequence belongs to the SprT family. It depends on Zn(2+) as a cofactor.

The protein resides in the cytoplasm. This is Protein SprT-like from Listeria innocua serovar 6a (strain ATCC BAA-680 / CLIP 11262).